The sequence spans 177 residues: Large ribosomal subunit protein uL6 (177 aa).

It belongs to the universal ribosomal protein uL6 family. As to quaternary structure, part of the 50S ribosomal subunit.

Its function is as follows. This protein binds to the 23S rRNA, and is important in its secondary structure. It is located near the subunit interface in the base of the L7/L12 stalk, and near the tRNA binding site of the peptidyltransferase center. The protein is Large ribosomal subunit protein uL6 of Pseudomonas paraeruginosa (strain DSM 24068 / PA7) (Pseudomonas aeruginosa (strain PA7)).